Consider the following 365-residue polypeptide: Fructose-1,6-bisphosphate aldolase/phosphatase (365 aa).

D11 acts as the Proton acceptor; for FBP phosphatase activity in catalysis. Mg(2+) is bound by residues D11, H18, D52, and D53. Position 18 (H18) interacts with beta-D-fructose 1,6-bisphosphate. Dihydroxyacetone phosphate is bound at residue H18. Y90 contacts beta-D-fructose 1,6-bisphosphate. Q94 is a binding site for Mg(2+). G103 to N104 contributes to the beta-D-fructose 1,6-bisphosphate binding site. D131 provides a ligand contact to Mg(2+). Beta-D-fructose 1,6-bisphosphate is bound at residue K132. A dihydroxyacetone phosphate-binding site is contributed by K132. Y228 acts as the Proton donor/acceptor; for FBP aldolase activity in catalysis. Positions 231, 232, and 233 each coordinate Mg(2+). The active-site Schiff-base intermediate with DHAP; for FBP aldolase activity is K231. Beta-D-fructose 1,6-bisphosphate is bound by residues Q241–S242, R265, D286, and Y347. Dihydroxyacetone phosphate contacts are provided by R265 and D286.

It belongs to the FBP aldolase/phosphatase family. In terms of assembly, homooctamer; dimer of tetramers. Mg(2+) serves as cofactor.

The catalysed reaction is beta-D-fructose 1,6-bisphosphate + H2O = beta-D-fructose 6-phosphate + phosphate. It carries out the reaction beta-D-fructose 1,6-bisphosphate = D-glyceraldehyde 3-phosphate + dihydroxyacetone phosphate. The protein operates within carbohydrate biosynthesis; gluconeogenesis. In terms of biological role, catalyzes two subsequent steps in gluconeogenesis: the aldol condensation of dihydroxyacetone phosphate (DHAP) and glyceraldehyde-3-phosphate (GA3P) to fructose-1,6-bisphosphate (FBP), and the dephosphorylation of FBP to fructose-6-phosphate (F6P). The protein is Fructose-1,6-bisphosphate aldolase/phosphatase of Methanothermobacter marburgensis (strain ATCC BAA-927 / DSM 2133 / JCM 14651 / NBRC 100331 / OCM 82 / Marburg) (Methanobacterium thermoautotrophicum).